The sequence spans 165 residues: Putative L,D-transpeptidase YkuD (165 aa).

One can recognise a LysM domain in the interval 2–46; the sequence is LMYQVKPGETLESIAADFRTTRQALLQANPGLNGGQVSAGQSIII. A L,D-TPase catalytic domain is found at 57-164; that stretch reads YRIAVSLNGR…VPNGTRVSIT (108 aa). Histidine 124 acts as the Proton donor/acceptor in catalysis. Cysteine 140 functions as the Nucleophile in the catalytic mechanism.

Belongs to the YkuD family. As to quaternary structure, monomer.

The protein localises to the spore wall. The protein operates within cell wall biogenesis; peptidoglycan biosynthesis. In terms of biological role, probable enzyme that may play an important role in cell wall biology. The protein is Putative L,D-transpeptidase YkuD of Bacillus licheniformis (strain ATCC 14580 / DSM 13 / JCM 2505 / CCUG 7422 / NBRC 12200 / NCIMB 9375 / NCTC 10341 / NRRL NRS-1264 / Gibson 46).